The primary structure comprises 276 residues: Dermonecrotic toxin Ls4SicTox-alphaIII1i (276 aa).

Residue H3 is part of the active site. The Mg(2+) site is built by E23 and D25. The active-site Nucleophile is H38. C42 and C48 are disulfide-bonded. D82 lines the Mg(2+) pocket.

The protein belongs to the arthropod phospholipase D family. Class I subfamily. It depends on Mg(2+) as a cofactor. Expressed by the venom gland.

The protein resides in the secreted. It catalyses the reaction an N-(acyl)-sphingosylphosphocholine = an N-(acyl)-sphingosyl-1,3-cyclic phosphate + choline. The catalysed reaction is an N-(acyl)-sphingosylphosphoethanolamine = an N-(acyl)-sphingosyl-1,3-cyclic phosphate + ethanolamine. It carries out the reaction a 1-acyl-sn-glycero-3-phosphocholine = a 1-acyl-sn-glycero-2,3-cyclic phosphate + choline. The enzyme catalyses a 1-acyl-sn-glycero-3-phosphoethanolamine = a 1-acyl-sn-glycero-2,3-cyclic phosphate + ethanolamine. In terms of biological role, dermonecrotic toxins cleave the phosphodiester linkage between the phosphate and headgroup of certain phospholipids (sphingolipid and lysolipid substrates), forming an alcohol (often choline) and a cyclic phosphate. This toxin acts on sphingomyelin (SM). It may also act on ceramide phosphoethanolamine (CPE), lysophosphatidylcholine (LPC) and lysophosphatidylethanolamine (LPE), but not on lysophosphatidylserine (LPS), and lysophosphatidylglycerol (LPG). It acts by transphosphatidylation, releasing exclusively cyclic phosphate products as second products. Induces dermonecrosis, hemolysis, increased vascular permeability, edema, inflammatory response, and platelet aggregation. The polypeptide is Dermonecrotic toxin Ls4SicTox-alphaIII1i (Loxosceles sp. (strain 4 GJB-2008) (Recluse spider)).